A 427-amino-acid polypeptide reads, in one-letter code: Anaerobic glycerol-3-phosphate dehydrogenase subunit B (427 aa).

It belongs to the anaerobic G-3-P dehydrogenase subunit B family. Composed of a catalytic GlpA/B dimer and of membrane bound GlpC. Requires FMN as cofactor.

It catalyses the reaction a quinone + sn-glycerol 3-phosphate = dihydroxyacetone phosphate + a quinol. It participates in polyol metabolism; glycerol degradation via glycerol kinase pathway; glycerone phosphate from sn-glycerol 3-phosphate (anaerobic route): step 1/1. In terms of biological role, conversion of glycerol 3-phosphate to dihydroxyacetone. Uses fumarate or nitrate as electron acceptor. The chain is Anaerobic glycerol-3-phosphate dehydrogenase subunit B from Glaesserella parasuis serovar 5 (strain SH0165) (Haemophilus parasuis).